The following is a 354-amino-acid chain: Uroporphyrinogen decarboxylase (354 aa).

Residues 27–31 (RQAGR), aspartate 77, tyrosine 154, threonine 209, and histidine 327 contribute to the substrate site.

The protein belongs to the uroporphyrinogen decarboxylase family. In terms of assembly, homodimer.

It is found in the cytoplasm. It carries out the reaction uroporphyrinogen III + 4 H(+) = coproporphyrinogen III + 4 CO2. The protein operates within porphyrin-containing compound metabolism; protoporphyrin-IX biosynthesis; coproporphyrinogen-III from 5-aminolevulinate: step 4/4. In terms of biological role, catalyzes the decarboxylation of four acetate groups of uroporphyrinogen-III to yield coproporphyrinogen-III. The chain is Uroporphyrinogen decarboxylase from Enterobacter sp. (strain 638).